The primary structure comprises 450 residues: Bifunctional apoptosis regulator (450 aa).

The segment covering 1 to 20 (MEEPQKNDLSMREQEEEHPV) has biased composition (basic and acidic residues). A disordered region spans residues 1–25 (MEEPQKNDLSMREQEEEHPVRSSGP). Residues 1-140 (MEEPQKNDLS…PSTGRVNPQR (140 aa)) are Cytoplasmic-facing. The RING-type zinc-finger motif lies at 34 to 74 (CHCCYDTLVNPTTLNCGHSFCRHCLALWWMSSKKTECPECR). The chain crosses the membrane as a helical span at residues 141-161 (GGGFFSGVLTALTGVAVILLV). Residues 162-331 (YHWRSRESEH…REPTWKQWRE (170 aa)) are Extracellular-facing. The SAM domain maps to 182–249 (WTMEEVVLWL…LTELERVRAL (68 aa)). N-linked (GlcNAc...) asparagine glycosylation is found at N232 and N308. A helical membrane pass occupies residues 332 to 352 (FLVKYSFLPYQLIAEFAWDWL). At 353–360 (EVHYWTSR) the chain is on the cytoplasmic side. A helical transmembrane segment spans residues 361 to 381 (FLIVNAVLLSVLELFSFWRIW). Over 382-404 (SRSELKTVPQRMWSHFWKVSTQG) the chain is Extracellular. Residues 405 to 425 (LFMAMFWPLIPQFVCNCLFYW) traverse the membrane as a helical segment. The Cytoplasmic portion of the chain corresponds to 426 to 450 (ALYFNPIINIDLVVKEVRRLETQVL).

As to quaternary structure, interacts with CASP8, BCL2 and BCL2L1 through SAM domain and also with HIP1, IFT57, ESRRBL1 and BCAP31. Interacts with NGFR; this interaction inhibits NF-kappa-B and JNK-related signaling pathways. Post-translationally, mediates RING-dependent self-ubiquitination leading to proteasomal degradation.

The protein resides in the endoplasmic reticulum membrane. The enzyme catalyses S-ubiquitinyl-[E2 ubiquitin-conjugating enzyme]-L-cysteine + [acceptor protein]-L-lysine = [E2 ubiquitin-conjugating enzyme]-L-cysteine + N(6)-ubiquitinyl-[acceptor protein]-L-lysine.. Its function is as follows. Membrane-bound E3 ubiquitin ligase that plays a role in several processes including apoptosis regulation or reticulum endoplasmic stress. Has anti-apoptotic activity, both for apoptosis triggered via death-receptors and via mitochondrial factors. Contributes to the dynamic control of IRE1/ERN1 signaling during ER stress by inducing BAX inhibitor 1/TMBIM6 proteasomal degradation. Promotes the activation of TGF-beta signaling by mediating the 'Lys-63'-linked ubiquitination of TGFBR1 which is critical to activate the pathway. Together with NGFR, negatively regulates NF-kappa-B and JNK-related signaling pathways. Promotes the proteasome-mediated degradation of PNPLA3, a protein involveld in lipid metabolism. The chain is Bifunctional apoptosis regulator (Bfar) from Mus musculus (Mouse).